The following is a 191-amino-acid chain: Cell division protein SepF (191 aa).

Positions 153-178 (FPEEASPSNVSSKKTSQYKFETNTTP) are enriched in polar residues. The interval 153 to 191 (FPEEASPSNVSSKKTSQYKFETNTTPEPAWGESKLSAYN) is disordered.

It belongs to the SepF family. In terms of assembly, homodimer. Interacts with FtsZ.

Its subcellular location is the cytoplasm. Its function is as follows. Cell division protein that is part of the divisome complex and is recruited early to the Z-ring. Probably stimulates Z-ring formation, perhaps through the cross-linking of FtsZ protofilaments. Its function overlaps with FtsA. This is Cell division protein SepF from Prochlorococcus marinus subsp. pastoris (strain CCMP1986 / NIES-2087 / MED4).